A 344-amino-acid polypeptide reads, in one-letter code: DNA-directed RNA polymerase subunit alpha (344 aa).

The alpha N-terminal domain (alpha-NTD) stretch occupies residues 1-238 (MKVIKTAPLI…KQLGVFGERP (238 aa)). The segment at 253 to 344 (DAKDLSAKIE…EKLEDKGGND (92 aa)) is alpha C-terminal domain (alpha-CTD).

It belongs to the RNA polymerase alpha chain family. Homodimer. The RNAP catalytic core consists of 2 alpha, 1 beta, 1 beta' and 1 omega subunit. When a sigma factor is associated with the core the holoenzyme is formed, which can initiate transcription.

The enzyme catalyses RNA(n) + a ribonucleoside 5'-triphosphate = RNA(n+1) + diphosphate. Its function is as follows. DNA-dependent RNA polymerase catalyzes the transcription of DNA into RNA using the four ribonucleoside triphosphates as substrates. The protein is DNA-directed RNA polymerase subunit alpha of Helicobacter pylori (strain HPAG1).